The following is a 256-amino-acid chain: HTH-type transcriptional regulator PrtR (256 aa).

The HTH cro/C1-type domain maps to 16-69; it reads LKQAMAMRNLKQETLAEAAGVSQNTIHKLTSGKAQSTRKLIEIAAALGVSPVWL. Residues 27-46 constitute a DNA-binding region (H-T-H motif); sequence QETLAEAAGVSQNTIHKLTS.

Its function is as follows. Represses the promoter activity of the prtN gene. This Pseudomonas aeruginosa (strain ATCC 15692 / DSM 22644 / CIP 104116 / JCM 14847 / LMG 12228 / 1C / PRS 101 / PAO1) protein is HTH-type transcriptional regulator PrtR (prtR).